The primary structure comprises 211 residues: Large ribosomal subunit protein eL13 (211 aa).

The protein belongs to the eukaryotic ribosomal protein eL13 family. In terms of assembly, component of the 60S large ribosomal subunit (LSU).

Its subcellular location is the cytoplasm. Functionally, component of the ribosome, a large ribonucleoprotein complex responsible for the synthesis of proteins in the cell. The small ribosomal subunit (SSU) binds messenger RNAs (mRNAs) and translates the encoded message by selecting cognate aminoacyl-transfer RNA (tRNA) molecules. The large subunit (LSU) contains the ribosomal catalytic site termed the peptidyl transferase center (PTC), which catalyzes the formation of peptide bonds, thereby polymerizing the amino acids delivered by tRNAs into a polypeptide chain. The nascent polypeptides leave the ribosome through a tunnel in the LSU and interact with protein factors that function in enzymatic processing, targeting, and the membrane insertion of nascent chains at the exit of the ribosomal tunnel. As part of the LSU, it is probably required for its formation and the maturation of rRNAs. The polypeptide is Large ribosomal subunit protein eL13 (rpl13) (Ictalurus punctatus (Channel catfish)).